The sequence spans 81 residues: Prophage excisionase-like protein (81 aa).

This sequence to lambdoid phages excisionases.

The protein is Prophage excisionase-like protein (xisE) of Escherichia coli (strain K12).